The chain runs to 590 residues: MAEETAALSTEKTEDTSTAPSTSAEKADGIDIDTEAKRLMGAGQKHLVMKDVRSAVNLFQEASSLLAKQYGETADECAEAFYSYGMSLLELARLENGVLGNALEGMPEDDEEEAEKEEDPNIPSADNLDEKEREQLREQVYDAMAEDQRAPDDTSESEAKGKPEGDSKDKEADEKMKNGQKETEKVTDDLKIDSASRDVPMDKSGKGEPPESKDAETLVEQKESKPETLKEKSIETKEKDLSKEKTDAKETANQSPDSTEVAEEKMDSEASESKESTSIPPTENEANKPDDPEKMEEEEEGEDSEENEDGTEENEGTEEKETEEEDVGNLQLAWEMLDLCKTIFKRQQSKEAQLKAAQAHQKLGEVCIESENYSQAVEDFLACLNIQKEHLEEHDRLLAETHYHLGLAYQYSSKHEEAISHFTQSIGVIEKRMDVLTKQLEASVGELVDEVKKEMDELKDLLPDIKEKIEDSKEAQKNATVTEKALKETLVGGSSGFSKENGSTSSSSAVEKSGDSTVPVTNCVSDISHLVRKKRKTEEESPLKDKDAKKSKQEPVANGAGNGDAVVPTNEEAEKAEEASMETATVESTA.

The disordered stretch occupies residues 1-30; sequence MAEETAALSTEKTEDTSTAPSTSAEKADGI. Residues 36–69 form a TPR 1 repeat; sequence AKRLMGAGQKHLVMKDVRSAVNLFQEASSLLAKQ. Positions 102–328 are disordered; sequence ALEGMPEDDE…EKETEEEDVG (227 aa). Positions 106–120 are enriched in acidic residues; sequence MPEDDEEEAEKEEDP. 2 stretches are compositionally biased toward basic and acidic residues: residues 128–250 and 262–275; these read LDEK…DAKE and AEEKMDSEASESKE. Residues 293–327 show a composition bias toward acidic residues; that stretch reads EKMEEEEEGEDSEENEDGTEENEGTEEKETEEEDV. TPR repeat units lie at residues 357 to 390 and 399 to 432; these read AQAHQKLGEVCIESENYSQAVEDFLACLNIQKEH and AETHYHLGLAYQYSSKHEEAISHFTQSIGVIEKR. A disordered region spans residues 492–590; that stretch reads GGSSGFSKEN…METATVESTA (99 aa). A compositionally biased stretch (polar residues) spans 496–525; the sequence is GFSKENGSTSSSSAVEKSGDSTVPVTNCVS. The short motif at 531–537 is the Nuclear localization signal element; the sequence is VRKKRKT. Positions 536-553 are enriched in basic and acidic residues; that stretch reads KTEEESPLKDKDAKKSKQ.

This sequence belongs to the NASP family.

The protein resides in the nucleus. In terms of biological role, this protein is involved in nucleosome assembly. It is bound to H3 and H4 in the absence of DNA, but released from H3 and H4 in the presence of DNA. This Xenopus laevis (African clawed frog) protein is Histone-binding protein N1/N2.